The primary structure comprises 477 residues: Inner membrane transporter YgjI (477 aa).

The Periplasmic portion of the chain corresponds to 1 to 8; the sequence is MSDTKRNT. The chain crosses the membrane as a helical span at residues 9 to 29; sequence IGKFGLLSLTFAAVYSFNNVI. Over 30–41 the chain is Cytoplasmic; sequence NNNIELGLASAP. A helical membrane pass occupies residues 42 to 62; the sequence is MFFLATIFYFIPFCLIIAEFV. Residues 63–83 lie on the Periplasmic side of the membrane; the sequence is SLNKNSEAGVYAWVKSSLGGR. Residues 84–104 form a helical membrane-spanning segment; sequence WAFITAYTYWFVNLFFFTSLL. Residues 105 to 120 lie on the Cytoplasmic side of the membrane; sequence PRVIAYASYAFLGYEY. A helical membrane pass occupies residues 121–141; that stretch reads IMTPVATTIISMVLFAFSTWV. The Periplasmic segment spans residues 142 to 158; the sequence is STNGAKMLGPITSVTST. Residues 159-179 traverse the membrane as a helical segment; sequence LMLLLTLSYILLAGTALVGGV. Topologically, residues 180–196 are cytoplasmic; the sequence is QPADAITVDAMIPNFNW. Residues 197-217 form a helical membrane-spanning segment; the sequence is AFLGVTTWIFMAAGGAESVAV. Residues 218-232 lie on the Periplasmic side of the membrane; that stretch reads YVNDVKGGSKSFVKV. A helical membrane pass occupies residues 233-253; the sequence is IILAGIFIGVLYSVSSVLINV. Topologically, residues 254-263 are cytoplasmic; it reads FVSSKELKFT. Residues 264–284 form a helical membrane-spanning segment; sequence GGSVQVFHGMAAYFGLPEALM. The Periplasmic segment spans residues 285–286; it reads NR. The chain crosses the membrane as a helical span at residues 287–307; it reads FVGLVSFTAMFGSLLMWTATP. Over 308-335 the chain is Cytoplasmic; that stretch reads VKIFFSEIPEGIFGKKTVELNENGVPAR. The helical transmembrane segment at 336-356 threads the bilayer; that stretch reads AAWIQFLIVIPLMIIPMLGSN. At 357–364 the chain is on the periplasmic side; that stretch reads TVQDLMNT. A helical membrane pass occupies residues 365 to 385; the sequence is IINMTAAASMLPPLFIMLAYL. The Cytoplasmic portion of the chain corresponds to 386–405; sequence NLRAKLDHLPRDFRMGSRRT. The chain crosses the membrane as a helical span at residues 406-426; the sequence is GIIVVSMLIAIFAVGFVASTF. The Periplasmic segment spans residues 427-431; the sequence is PTGAN. Residues 432-452 traverse the membrane as a helical segment; the sequence is ILTIIFYNVGGIVIFLGFAWW. At 453 to 477 the chain is on the cytoplasmic side; it reads KYSKYIKGLTAEERHIEATPASNVD.

The protein belongs to the amino acid-polyamine-organocation (APC) superfamily.

It localises to the cell inner membrane. The sequence is that of Inner membrane transporter YgjI (ygjI) from Escherichia coli (strain K12).